Consider the following 1054-residue polypeptide: Probable sucrose-phosphate synthase 1 (1054 aa).

The segment covering 104–115 has biased composition (basic and acidic residues); the sequence is RLERERGRREAV. 3 disordered regions span residues 104–125, 674–693, and 708–727; these read RLER…LSEG, LRNE…SDSL, and DGDK…DDRA.

Belongs to the glycosyltransferase 1 family. As to quaternary structure, homodimer or homotetramer.

The catalysed reaction is beta-D-fructose 6-phosphate + UDP-alpha-D-glucose = sucrose 6(F)-phosphate + UDP + H(+). It functions in the pathway glycan biosynthesis; sucrose biosynthesis; sucrose from D-fructose 6-phosphate and UDP-alpha-D-glucose: step 1/2. Its activity is regulated as follows. Activity is regulated by phosphorylation and moderated by concentration of metabolites and light. Functionally, plays a role in photosynthetic sucrose synthesis by catalyzing the rate-limiting step of sucrose biosynthesis from UDP-glucose and fructose- 6-phosphate. Involved in the regulation of carbon partitioning in the leaves of plants. May regulate the synthesis of sucrose and therefore play a major role as a limiting factor in the export of photoassimilates out of the leaf. Plays a role for sucrose availability that is essential for plant growth and fiber elongation. The protein is Probable sucrose-phosphate synthase 1 (SPS1) of Craterostigma plantagineum (Blue gem).